The sequence spans 311 residues: JNK1/MAPK8-associated membrane protein (311 aa).

The Lumenal portion of the chain corresponds to 1–57 (MAVDIQPACLGLYCGKTLLFKNGSTEIYGECGVCPRGQRTNAQKYCQPCTESPELYD). Asn22 is a glycosylation site (N-linked (GlcNAc...) asparagine). Residues 58–78 (WLYLGFMAMLPLVLHWFFIEW) form a helical membrane-spanning segment. The Cytoplasmic segment spans residues 79 to 87 (YSGKKSSSA). The chain crosses the membrane as a helical span at residues 88-108 (LFQHITALFECSMAAIITLLV). Topologically, residues 109-149 (SDPVGVLYIRSCRVLMLSDWYTMLYNPSPDYVTTVHCTHEA) are lumenal. The helical transmembrane segment at 150–170 (VYPLYTIVFIYYAFCLVLMML) threads the bilayer. The Cytoplasmic segment spans residues 171–188 (LRPLLVKKIACGLGKSDR). The chain crosses the membrane as a helical span at residues 189–209 (FKSIYAALYFFPILTVLQAVG). Position 210 (Gly210) is a topological domain, lumenal. Residues 211-231 (GLLYYAFPYIILVLSLVTLAV) form a helical membrane-spanning segment. The Cytoplasmic portion of the chain corresponds to 232–250 (YMSASEIENCYDLLVRKKR). Residues 251–271 (LIVLFSHWLLHAYGIISISRV) traverse the membrane as a helical segment. Topologically, residues 272–277 (DKLEQD) are lumenal. A helical membrane pass occupies residues 278–298 (LPLLALVPTPALFYLFTAKFT). Over 299–311 (EPSRILSEGANGH) the chain is Cytoplasmic.

As to quaternary structure, interacts with RNF5 and MAPK8, but not with MAPK9. Binding to MAPK8 occurs before and after exposure to stress, such as UV irradiation. After exposure to stress, interacts with phosphorylated MAPK8. Competes with DUSP10 for MAPK8 binding. Associates with multiple components of the proteasome and with ERAD regulatory proteins including AMFR/GP78, CANX, PSMC1, PSMC2, PSMC3/TBP1, PSMC5, PSMC6, PSMD8, SEC61-ALPHA and UFD1. Interacts with DERL1 (in the presence of misfolded protein CFTR(F508del)). Ubiquitinated by RNF5 via 'Lys-63'-linked ubiquitin linkage in a UBE2N-dependent manner. Ubiquitination decreases association with components of the proteasome and ERAD.

The protein localises to the endoplasmic reticulum membrane. In terms of biological role, regulates the duration of MAPK8 activity in response to various stress stimuli. Facilitates degradation of misfolded endoplasmic reticulum (ER) proteins through the recruitment of components of the proteasome and endoplasmic reticulum-associated degradation (ERAD) system. In Homo sapiens (Human), this protein is JNK1/MAPK8-associated membrane protein (JKAMP).